Consider the following 401-residue polypeptide: Subtilisin-like protease 7 (401 aa).

The N-terminal stretch at 1-20 (MGFITKAIPLALAAASVING) is a signal peptide. The propeptide occupies 21 to 119 (AEILETRAGV…IERDARVQIN (99 aa)). An Inhibitor I9 domain is found at 36–118 (KYIVVMNDGM…YIERDARVQI (83 aa)). Asparagine 58 carries an N-linked (GlcNAc...) asparagine glycan. Positions 129–401 (SWGLARVGSR…SKLINNGSGM (273 aa)) constitute a Peptidase S8 domain. Active-site charge relay system residues include aspartate 161 and histidine 193. Asparagine 223 and asparagine 253 each carry an N-linked (GlcNAc...) asparagine glycan. Serine 347 acts as the Charge relay system in catalysis. Asparagine 397 is a glycosylation site (N-linked (GlcNAc...) asparagine).

Belongs to the peptidase S8 family.

The protein resides in the secreted. Secreted subtilisin-like serine protease with keratinolytic activity that contributes to pathogenicity. The polypeptide is Subtilisin-like protease 7 (SUB7) (Trichophyton equinum (Horse ringworm fungus)).